The primary structure comprises 201 residues: Adenylyl-sulfate kinase (201 aa).

Residue 35-42 participates in ATP binding; sequence GLSGSGKS. S109 (phosphoserine intermediate) is an active-site residue.

Belongs to the APS kinase family.

It catalyses the reaction adenosine 5'-phosphosulfate + ATP = 3'-phosphoadenylyl sulfate + ADP + H(+). The protein operates within sulfur metabolism; hydrogen sulfide biosynthesis; sulfite from sulfate: step 2/3. Catalyzes the synthesis of activated sulfate. This chain is Adenylyl-sulfate kinase, found in Prochlorococcus marinus (strain SARG / CCMP1375 / SS120).